The sequence spans 414 residues: Tyrosine--tRNA ligase (414 aa).

The 'HIGH' region signature appears at 57–66 (PSAPDVHIGH). The 'KMSKS' region signature appears at 241 to 245 (KMSKS). Lysine 244 contacts ATP. The region spanning 352–413 (VPLIDLLVTL…GKRKFAKLSL (62 aa)) is the S4 RNA-binding domain.

This sequence belongs to the class-I aminoacyl-tRNA synthetase family. TyrS type 2 subfamily. As to quaternary structure, homodimer.

It localises to the cytoplasm. The catalysed reaction is tRNA(Tyr) + L-tyrosine + ATP = L-tyrosyl-tRNA(Tyr) + AMP + diphosphate + H(+). Functionally, catalyzes the attachment of tyrosine to tRNA(Tyr) in a two-step reaction: tyrosine is first activated by ATP to form Tyr-AMP and then transferred to the acceptor end of tRNA(Tyr). In Shouchella clausii (strain KSM-K16) (Alkalihalobacillus clausii), this protein is Tyrosine--tRNA ligase.